A 47-amino-acid chain; its full sequence is MPFEEAMKRLFMKKICMRCNARNPWRATKCRKCGYKGLRPKAKEPRG.

This sequence belongs to the eukaryotic ribosomal protein eL40 family.

The protein is Large ribosomal subunit protein eL40 of Methanocaldococcus jannaschii (strain ATCC 43067 / DSM 2661 / JAL-1 / JCM 10045 / NBRC 100440) (Methanococcus jannaschii).